Reading from the N-terminus, the 538-residue chain is RNA-binding protein Ro60 (538 aa).

Position 1 is an N-acetylmethionine (Met1). Phosphoserine occurs at positions 4 and 19. Residues 16–369 (VVNSEGGCVW…TFKTVEPTGK (354 aa)) form the TROVE domain. Residues 120-284 (RIPTHLFTFI…EMPLTALLRN (165 aa)) form an RNA-binding region. Lys224 is modified (N6-acetyllysine). The tract at residues 361–538 (FKTVEPTGKR…VIRNFTLDVI (178 aa)) is VWFA-like domain. Ser378, Ser380, and Thr445 together coordinate a divalent metal cation.

Belongs to the Ro 60 kDa family. Identified in a IGF2BP1-dependent mRNP granule complex containing untranslated mRNAs. Found in a complex with PUF60 and Y5 RNA. Interacts with RAB11FIP5. As to expression, highest in brain, followed by lung, muscle, kidney and heart. Lower levels are found in testis, liver and spleen.

Its subcellular location is the cytoplasm. RNA-binding protein that binds to misfolded non-coding RNAs, pre-5S rRNA, and several small cytoplasmic RNA molecules known as Y RNAs. May play roles in cilia formation and/or maintenance. The sequence is that of RNA-binding protein Ro60 from Mus musculus (Mouse).